Reading from the N-terminus, the 295-residue chain is Alpha-soluble NSF attachment protein (295 aa).

Met1 carries the post-translational modification N-acetylmethionine. 3 positions are modified to phosphoserine: Ser26, Ser29, and Ser195.

Belongs to the SNAP family. As to quaternary structure, interacts with PRKCABP, and disrupts the interaction between GRIA2 and PRKCABP, leading to the internalization of GRIA2. Found in a complex with VAMP8. Component of a SNARE-like complex that contains at least ZW10, USE1L, RINT1, STX18 and NAPA/SNAP-alpha. Interacts with VTI1A. Interacts with STX12. Interacts with GNA12 (via N-terminus); the interaction promotes CDH5 localization to plasma membrane.

The protein resides in the cell membrane. Its function is as follows. Required for vesicular transport between the endoplasmic reticulum and the Golgi apparatus. Together with GNA12 promotes CDH5 localization to plasma membrane. This chain is Alpha-soluble NSF attachment protein (NAPA), found in Homo sapiens (Human).